The following is a 662-amino-acid chain: Protein translocase subunit SecA 2 (662 aa).

ATP contacts are provided by residues Gln110, 128–132 (GEGKT), and Asp538.

This sequence belongs to the SecA family. Monomer and homodimer. Part of the essential Sec protein translocation apparatus which comprises SecA, SecYEG and auxiliary proteins SecDF. Other proteins may also be involved.

The protein resides in the cell inner membrane. The protein localises to the cytoplasm. The enzyme catalyses ATP + H2O + cellular proteinSide 1 = ADP + phosphate + cellular proteinSide 2.. Functionally, part of the Sec protein translocase complex. Interacts with the SecYEG preprotein conducting channel. Has a central role in coupling the hydrolysis of ATP to the transfer of proteins into and across the cell membrane, serving as an ATP-driven molecular motor driving the stepwise translocation of polypeptide chains across the membrane. In Chlorobium chlorochromatii (strain CaD3), this protein is Protein translocase subunit SecA 2.